A 404-amino-acid polypeptide reads, in one-letter code: Probable tRNA sulfurtransferase (404 aa).

The THUMP domain occupies 60–165 (EPVAEALKNV…DEAAYISHEE (106 aa)). ATP-binding positions include 183-184 (ML), 208-209 (HF), Arg-265, Gly-287, and Gln-296.

The protein belongs to the ThiI family.

The protein resides in the cytoplasm. The catalysed reaction is [ThiI sulfur-carrier protein]-S-sulfanyl-L-cysteine + a uridine in tRNA + 2 reduced [2Fe-2S]-[ferredoxin] + ATP + H(+) = [ThiI sulfur-carrier protein]-L-cysteine + a 4-thiouridine in tRNA + 2 oxidized [2Fe-2S]-[ferredoxin] + AMP + diphosphate. It carries out the reaction [ThiS sulfur-carrier protein]-C-terminal Gly-Gly-AMP + S-sulfanyl-L-cysteinyl-[cysteine desulfurase] + AH2 = [ThiS sulfur-carrier protein]-C-terminal-Gly-aminoethanethioate + L-cysteinyl-[cysteine desulfurase] + A + AMP + 2 H(+). Its pathway is cofactor biosynthesis; thiamine diphosphate biosynthesis. In terms of biological role, catalyzes the ATP-dependent transfer of a sulfur to tRNA to produce 4-thiouridine in position 8 of tRNAs, which functions as a near-UV photosensor. Also catalyzes the transfer of sulfur to the sulfur carrier protein ThiS, forming ThiS-thiocarboxylate. This is a step in the synthesis of thiazole, in the thiamine biosynthesis pathway. The sulfur is donated as persulfide by IscS. The chain is Probable tRNA sulfurtransferase from Streptococcus uberis (strain ATCC BAA-854 / 0140J).